Consider the following 479-residue polypeptide: MGAFLDKPKTEKHNAHGAGNGLRYGLSSMQGWRVEMEDAHTAVVGIPHGLEDWSFFAVYDGHAGSRVANYCSTHLLEHITTNEDFRAAGKSGSALELSVENVKNGIRTGFLKIDEYMRNFSDLRNGMDRSGSTAVGVMISPKHIYFINCGDSRAVLYRNGQVCFSTQDHKPCNPREKERIQNAGGSVMIQRVNGSLAVSRALGDYDYKCVDGKGPTEQLVSPEPEVYEILRAEEDEFIILACDGIWDVMSNEELCEYVKSRLEVSDDLENVCNWVVDTCLHKGSRDNMSIVLVCFSNAPKVSDEAVKKDSELDKHLESRVEEIMEKSGEEGMPDLAHVMRILSAENIPNLPPGGGLAGKRNVIEAVYSRLNPHRESDGASDEAEESGSQGKLVEALRQMRINHRGNYRQLLEEMLTSYRLAKVEGEESPAEPAATATSSNSDAGNPVTMQESHTESESGLAELDSSNEDAGTKMSGEKI.

The span at 1 to 14 (MGAFLDKPKTEKHN) shows a compositional bias: basic and acidic residues. The interval 1–20 (MGAFLDKPKTEKHNAHGAGN) is disordered. Gly-2 carries N-myristoyl glycine lipidation. Residue Lys-12 forms a Glycyl lysine isopeptide (Lys-Gly) (interchain with G-Cter in ISG15) linkage. The region spanning 23–295 (RYGLSSMQGW…DNMSIVLVCF (273 aa)) is the PPM-type phosphatase domain. Residues Asp-60 and Gly-61 each contribute to the Mn(2+) site. A Glycyl lysine isopeptide (Lys-Gly) (interchain with G-Cter in ISG15) cross-link involves residue Lys-142. The Mn(2+) site is built by Asp-243 and Asp-286. Ser-386 carries the phosphoserine modification. Residues 423-479 (VEGEESPAEPAATATSSNSDAGNPVTMQESHTESESGLAELDSSNEDAGTKMSGEKI) are disordered. Low complexity predominate over residues 430–439 (AEPAATATSS). Polar residues predominate over residues 440 to 451 (NSDAGNPVTMQE).

This sequence belongs to the PP2C family. In terms of assembly, monomer. Interacts with PAK6. Interacts with the phosphorylated form of IKBKB/IKKB. It depends on Mg(2+) as a cofactor. Mn(2+) is required as a cofactor. Isgylation negatively regulates its activity. In terms of processing, N-myristoylation is essential for the recognition of its substrates for dephosphorylation. In terms of tissue distribution, highly expressed in heart and skeletal muscle.

Its subcellular location is the cytoplasm. It localises to the cytosol. The protein resides in the membrane. It carries out the reaction O-phospho-L-seryl-[protein] + H2O = L-seryl-[protein] + phosphate. The enzyme catalyses O-phospho-L-threonyl-[protein] + H2O = L-threonyl-[protein] + phosphate. Its function is as follows. Enzyme with a broad specificity. Dephosphorylates CDK2 and CDK6 in vitro. Dephosphorylates PRKAA1 and PRKAA2. Inhibits TBK1-mediated antiviral signaling by dephosphorylating it at 'Ser-172'. Plays an important role in the termination of TNF-alpha-mediated NF-kappa-B activation through dephosphorylating and inactivating IKBKB/IKKB. The protein is Protein phosphatase 1B (PPM1B) of Homo sapiens (Human).